Reading from the N-terminus, the 307-residue chain is 4-hydroxythreonine-4-phosphate dehydrogenase (307 aa).

Substrate-binding residues include His121 and Thr122. A divalent metal cation is bound by residues His150, His189, and His245. 3 residues coordinate substrate: Lys253, Asn262, and Arg271.

The protein belongs to the PdxA family. In terms of assembly, homodimer. The cofactor is Zn(2+). It depends on Mg(2+) as a cofactor. Co(2+) is required as a cofactor.

It localises to the cytoplasm. It carries out the reaction 4-(phosphooxy)-L-threonine + NAD(+) = 3-amino-2-oxopropyl phosphate + CO2 + NADH. It participates in cofactor biosynthesis; pyridoxine 5'-phosphate biosynthesis; pyridoxine 5'-phosphate from D-erythrose 4-phosphate: step 4/5. Its function is as follows. Catalyzes the NAD(P)-dependent oxidation of 4-(phosphooxy)-L-threonine (HTP) into 2-amino-3-oxo-4-(phosphooxy)butyric acid which spontaneously decarboxylates to form 3-amino-2-oxopropyl phosphate (AHAP). This chain is 4-hydroxythreonine-4-phosphate dehydrogenase, found in Sulfurimonas denitrificans (strain ATCC 33889 / DSM 1251) (Thiomicrospira denitrificans (strain ATCC 33889 / DSM 1251)).